The primary structure comprises 293 residues: Elongation factor Ts (293 aa).

The segment at 80–83 is involved in Mg(2+) ion dislocation from EF-Tu; sequence TDFV.

This sequence belongs to the EF-Ts family.

The protein localises to the cytoplasm. In terms of biological role, associates with the EF-Tu.GDP complex and induces the exchange of GDP to GTP. It remains bound to the aminoacyl-tRNA.EF-Tu.GTP complex up to the GTP hydrolysis stage on the ribosome. This is Elongation factor Ts from Burkholderia cenocepacia (strain HI2424).